Consider the following 455-residue polypeptide: Bleomycin hydrolase (455 aa).

Catalysis depends on residues Cys73, His372, and Asn396.

The protein belongs to the peptidase C1 family. As to quaternary structure, homooctamer.

Its subcellular location is the cytoplasm. It catalyses the reaction Inactivates bleomycin B2 (a cytotoxic glycometallopeptide) by hydrolysis of a carboxyamide bond of beta-aminoalanine, but also shows general aminopeptidase activity. The specificity varies somewhat with source, but amino acid arylamides of Met, Leu and Ala are preferred.. Its function is as follows. The normal physiological role of BLM hydrolase is unknown, but it catalyzes the inactivation of the antitumor drug BLM (a glycopeptide) by hydrolyzing the carboxamide bond of its B-aminoalaninamide moiety thus protecting normal and malignant cells from BLM toxicity. The sequence is that of Bleomycin hydrolase (BLMH) from Gallus gallus (Chicken).